Consider the following 274-residue polypeptide: Putative pyruvate, phosphate dikinase regulatory protein (274 aa).

Residue 153-160 (GISRTSKT) coordinates ADP.

It belongs to the pyruvate, phosphate/water dikinase regulatory protein family. PDRP subfamily.

The enzyme catalyses N(tele)-phospho-L-histidyl/L-threonyl-[pyruvate, phosphate dikinase] + ADP = N(tele)-phospho-L-histidyl/O-phospho-L-threonyl-[pyruvate, phosphate dikinase] + AMP + H(+). It catalyses the reaction N(tele)-phospho-L-histidyl/O-phospho-L-threonyl-[pyruvate, phosphate dikinase] + phosphate + H(+) = N(tele)-phospho-L-histidyl/L-threonyl-[pyruvate, phosphate dikinase] + diphosphate. Its function is as follows. Bifunctional serine/threonine kinase and phosphorylase involved in the regulation of the pyruvate, phosphate dikinase (PPDK) by catalyzing its phosphorylation/dephosphorylation. This Bartonella tribocorum (strain CIP 105476 / IBS 506) protein is Putative pyruvate, phosphate dikinase regulatory protein.